We begin with the raw amino-acid sequence, 404 residues long: Acetate kinase (404 aa).

Asn-7 serves as a coordination point for Mg(2+). Residue Lys-14 coordinates ATP. Position 98 (Arg-98) interacts with substrate. Asp-155 functions as the Proton donor/acceptor in the catalytic mechanism. Residues 214 to 218 (HLGNG), 289 to 291 (DLR), and 337 to 341 (GIGEN) each bind ATP. Glu-390 contacts Mg(2+).

Belongs to the acetokinase family. In terms of assembly, homodimer. The cofactor is Mg(2+). Mn(2+) serves as cofactor.

Its subcellular location is the cytoplasm. It carries out the reaction acetate + ATP = acetyl phosphate + ADP. It participates in metabolic intermediate biosynthesis; acetyl-CoA biosynthesis; acetyl-CoA from acetate: step 1/2. Functionally, catalyzes the formation of acetyl phosphate from acetate and ATP. Can also catalyze the reverse reaction. This chain is Acetate kinase, found in Rippkaea orientalis (strain PCC 8801 / RF-1) (Cyanothece sp. (strain PCC 8801)).